We begin with the raw amino-acid sequence, 241 residues long: Regulatory protein VirG (241 aa).

The region spanning 3–117 (HVLVIDDDVA…EFLARIRVAL (115 aa)) is the Response regulatory domain. Residue D52 is modified to 4-aspartylphosphate. Positions 129-229 (RRSFYFADWT…ARGAGYFFDA (101 aa)) form a DNA-binding region, ompR/PhoB-type.

Phosphorylated by wide host range (WHR) VirA protein.

The protein resides in the cytoplasm. Its function is as follows. VirG is required for the positive regulation of at least two vir loci encoded by the Ri plasmid of A.rhizogenes. The protein is Regulatory protein VirG (virG) of Rhizobium rhizogenes (Agrobacterium rhizogenes).